Reading from the N-terminus, the 245-residue chain is 5-oxoprolinase subunit A (245 aa).

It belongs to the LamB/PxpA family. Forms a complex composed of PxpA, PxpB and PxpC.

It catalyses the reaction 5-oxo-L-proline + ATP + 2 H2O = L-glutamate + ADP + phosphate + H(+). Functionally, catalyzes the cleavage of 5-oxoproline to form L-glutamate coupled to the hydrolysis of ATP to ADP and inorganic phosphate. The chain is 5-oxoprolinase subunit A from Haemophilus influenzae (strain 86-028NP).